Consider the following 264-residue polypeptide: Elongation factor Ts (264 aa).

The involved in Mg(2+) ion dislocation from EF-Tu stretch occupies residues 76-79 (TDFV).

It belongs to the EF-Ts family.

It is found in the cytoplasm. Its function is as follows. Associates with the EF-Tu.GDP complex and induces the exchange of GDP to GTP. It remains bound to the aminoacyl-tRNA.EF-Tu.GTP complex up to the GTP hydrolysis stage on the ribosome. This Deinococcus radiodurans (strain ATCC 13939 / DSM 20539 / JCM 16871 / CCUG 27074 / LMG 4051 / NBRC 15346 / NCIMB 9279 / VKM B-1422 / R1) protein is Elongation factor Ts.